The following is a 152-amino-acid chain: 6,7-dimethyl-8-ribityllumazine synthase (152 aa).

5-amino-6-(D-ribitylamino)uracil-binding positions include Phe21, 55 to 57 (AFE), and 79 to 81 (CVI). 84–85 (ST) is a binding site for (2S)-2-hydroxy-3-oxobutyl phosphate. Catalysis depends on His87, which acts as the Proton donor. Phe112 provides a ligand contact to 5-amino-6-(D-ribitylamino)uracil. Residue Arg126 participates in (2S)-2-hydroxy-3-oxobutyl phosphate binding.

It belongs to the DMRL synthase family. Forms an icosahedral capsid composed of 60 subunits, arranged as a dodecamer of pentamers.

It carries out the reaction (2S)-2-hydroxy-3-oxobutyl phosphate + 5-amino-6-(D-ribitylamino)uracil = 6,7-dimethyl-8-(1-D-ribityl)lumazine + phosphate + 2 H2O + H(+). The protein operates within cofactor biosynthesis; riboflavin biosynthesis; riboflavin from 2-hydroxy-3-oxobutyl phosphate and 5-amino-6-(D-ribitylamino)uracil: step 1/2. Its function is as follows. Catalyzes the formation of 6,7-dimethyl-8-ribityllumazine by condensation of 5-amino-6-(D-ribitylamino)uracil with 3,4-dihydroxy-2-butanone 4-phosphate. This is the penultimate step in the biosynthesis of riboflavin. This chain is 6,7-dimethyl-8-ribityllumazine synthase, found in Staphylococcus saprophyticus subsp. saprophyticus (strain ATCC 15305 / DSM 20229 / NCIMB 8711 / NCTC 7292 / S-41).